The sequence spans 421 residues: Queuine tRNA-ribosyltransferase accessory subunit 2 (421 aa).

Positions 328, 330, 333, and 359 each coordinate Zn(2+).

Belongs to the queuine tRNA-ribosyltransferase family. QTRT2 subfamily. In terms of assembly, heterodimer of a catalytic subunit and an accessory subunit. Requires Zn(2+) as cofactor.

Its subcellular location is the cytoplasm. Its function is as follows. Non-catalytic subunit of the queuine tRNA-ribosyltransferase (TGT) that catalyzes the base-exchange of a guanine (G) residue with queuine (Q) at position 34 (anticodon wobble position) in tRNAs with GU(N) anticodons (tRNA-Asp, -Asn, -His and -Tyr), resulting in the hypermodified nucleoside queuosine (7-(((4,5-cis-dihydroxy-2-cyclopenten-1-yl)amino)methyl)-7-deazaguanosine). The chain is Queuine tRNA-ribosyltransferase accessory subunit 2 from Aedes aegypti (Yellowfever mosquito).